The following is a 125-amino-acid chain: Large ribosomal subunit protein bL19 (125 aa).

This sequence belongs to the bacterial ribosomal protein bL19 family.

This protein is located at the 30S-50S ribosomal subunit interface and may play a role in the structure and function of the aminoacyl-tRNA binding site. The protein is Large ribosomal subunit protein bL19 of Ehrlichia canis (strain Jake).